Consider the following 457-residue polypeptide: RuvB-like helicase 1 (457 aa).

An ATP-binding site is contributed by 73–80 (GGPSTGKT).

This sequence belongs to the RuvB family. May form heterododecamers with RVB2. Component of the SWR1 chromatin remodeling complex, the INO80 chromatin remodeling complex, and of the R2TP complex.

Its subcellular location is the nucleus. It catalyses the reaction ATP + H2O = ADP + phosphate + H(+). Functionally, DNA helicase which participates in several chromatin remodeling complexes, including the SWR1 and the INO80 complexes. The SWR1 complex mediates the ATP-dependent exchange of histone H2A for the H2A variant HZT1 leading to transcriptional regulation of selected genes by chromatin remodeling. The INO80 complex remodels chromatin by shifting nucleosomes and is involved in DNA repair. Also involved in pre-rRNA processing. The chain is RuvB-like helicase 1 (RVB1) from Kluyveromyces lactis (strain ATCC 8585 / CBS 2359 / DSM 70799 / NBRC 1267 / NRRL Y-1140 / WM37) (Yeast).